The following is a 542-amino-acid chain: Global nitrogen regulator NrpR (542 aa).

A winged helix-turn-helix region spans residues 12-77 (IEILDILSKS…VITERGLEEL (66 aa)). NRD regions lie at residues 85 to 320 (RLGS…KANI) and 321 to 542 (RIKT…YKEI).

This sequence belongs to the NrpR family. As to quaternary structure, homodimer.

Under nitrogen limitation, binding of the intracellular nitrogen metabolite 2-oxoglutarate to NrpR decreases the binding affinity of NrpR to DNA, leading to initiation of transcription. In terms of biological role, transcriptional repressor of nitrogen fixation and assimilation genes. Binds to two tandem operators in the glnA and nif promoters, thereby blocking transcription of the genes. The polypeptide is Global nitrogen regulator NrpR (Methanocaldococcus jannaschii (strain ATCC 43067 / DSM 2661 / JAL-1 / JCM 10045 / NBRC 100440) (Methanococcus jannaschii)).